The sequence spans 168 residues: MFQIPEFEPSEQEDSSSAERGLGPSPAGDGPSGSGKHHRQAPGLLWDASHQQEQPTSSSHHGGAGAVEIRSRHSSYPAGTEDDEGMGEEPSPFRGRSRSAPPNLWAAQRYGRELRRMSDEFVDSFKKGLPRPKSAGTATQMRQSSSWTRVFQSWWDRNLGRGSSAPSQ.

Met-1 is modified (N-acetylmethionine). The tract at residues 1–105 (MFQIPEFEPS…RSRSAPPNLW (105 aa)) is disordered. Residue Ser-25 is modified to Phosphoserine. Residues 49–60 (SHQQEQPTSSSH) are compositionally biased toward polar residues. A phosphoserine mark is found at Ser-75 and Ser-91. Asymmetric dimethylarginine; by PRMT1 is present on residues Arg-94 and Arg-96. Ser-97 bears the Phosphoserine mark. The residue at position 99 (Ser-99) is a Phosphoserine; by PKA, PKB, PAK1, RPS6KA1, RPS6KB1 and PKC/PRKCQ. Ser-99 is subject to Phosphoserine; by PKB/AKT1. A BH3 motif is present at residues 110–124 (YGRELRRMSDEFVDS). Phosphoserine occurs at positions 118 and 134. Residues 125–145 (FKKGLPRPKSAGTATQMRQSS) form a disordered region. Over residues 136 to 145 (GTATQMRQSS) the composition is skewed to polar residues. Position 161 is an omega-N-methylarginine (Arg-161).

The protein belongs to the Bcl-2 family. In terms of assembly, forms heterodimers with the anti-apoptotic proteins, Bcl-X(L), Bcl-2 and Bcl-W. Also binds protein S100A10. The Ser-75/Ser-99 phosphorylated form binds 14-3-3 proteins. Interacts with AKT1 and PIM3. Interacts (via BH3 domain) with NOL3 (via CARD domain); preventing the association of BAD with BCL2. Interacts with HIF3A (via C-terminus domain); the interaction reduces the binding between BAD and BAX. Interacts with GIMAP3/IAN4 and GIMAP5/IAN5. In terms of processing, phosphorylated on one or more of Ser-75, Ser-99, Ser-118 and Ser-134 in response to survival stimuli, which blocks its pro-apoptotic activity. Phosphorylation on Ser-99 or Ser-75 promotes heterodimerization with 14-3-3 proteins. This interaction then facilitates the phosphorylation at Ser-118, a site within the BH3 motif, leading to the release of Bcl-X(L) and the promotion of cell survival. Ser-99 is the major site of AKT/PKB phosphorylation, Ser-118 the major site of protein kinase A (CAPK) phosphorylation. Phosphorylation at Ser-99 by PKB/AKT1 is almost completely blocked by the apoptotic C-terminus cleavage product of PKN2 generated by caspases-3 activity during apoptosis. Post-translationally, methylation at Arg-94 and Arg-96 by PRMT1 inhibits Akt-mediated phosphorylation at Ser-99. Expressed in a wide variety of tissues.

It is found in the mitochondrion outer membrane. The protein resides in the cytoplasm. Functionally, promotes cell death. Successfully competes for the binding to Bcl-X(L), Bcl-2 and Bcl-W, thereby affecting the level of heterodimerization of these proteins with BAX. Can reverse the death repressor activity of Bcl-X(L), but not that of Bcl-2. Appears to act as a link between growth factor receptor signaling and the apoptotic pathways. The protein is Bcl2-associated agonist of cell death (BAD) of Homo sapiens (Human).